The primary structure comprises 309 residues: Elongation factor Ts (309 aa).

The segment at 82–85 is involved in Mg(2+) ion dislocation from EF-Tu; it reads TDFV.

It belongs to the EF-Ts family.

The protein localises to the cytoplasm. Functionally, associates with the EF-Tu.GDP complex and induces the exchange of GDP to GTP. It remains bound to the aminoacyl-tRNA.EF-Tu.GTP complex up to the GTP hydrolysis stage on the ribosome. The protein is Elongation factor Ts of Rickettsia africae (strain ESF-5).